A 234-amino-acid polypeptide reads, in one-letter code: Sugar fermentation stimulation protein A (234 aa).

A DNA-binding region (H-T-H motif) is located at residues Leu201 to Ser220.

Belongs to the SfsA family.

In terms of biological role, binds to DNA non-specifically. Could be a regulatory factor involved in maltose metabolism. This chain is Sugar fermentation stimulation protein A, found in Shigella flexneri serotype 5b (strain 8401).